Consider the following 428-residue polypeptide: 3-phosphoshikimate 1-carboxyvinyltransferase (428 aa).

Positions 19, 20, and 24 each coordinate 3-phosphoshikimate. Lys-19 contributes to the phosphoenolpyruvate binding site. 2 residues coordinate phosphoenolpyruvate: Gly-91 and Arg-119. Residues Ser-164, Gln-166, Asp-312, and Lys-339 each coordinate 3-phosphoshikimate. Gln-166 lines the phosphoenolpyruvate pocket. Asp-312 acts as the Proton acceptor in catalysis. Residues Arg-343 and Arg-386 each coordinate phosphoenolpyruvate.

This sequence belongs to the EPSP synthase family. As to quaternary structure, monomer.

The protein localises to the cytoplasm. The catalysed reaction is 3-phosphoshikimate + phosphoenolpyruvate = 5-O-(1-carboxyvinyl)-3-phosphoshikimate + phosphate. Its pathway is metabolic intermediate biosynthesis; chorismate biosynthesis; chorismate from D-erythrose 4-phosphate and phosphoenolpyruvate: step 6/7. Functionally, catalyzes the transfer of the enolpyruvyl moiety of phosphoenolpyruvate (PEP) to the 5-hydroxyl of shikimate-3-phosphate (S3P) to produce enolpyruvyl shikimate-3-phosphate and inorganic phosphate. In Bacillus velezensis (strain DSM 23117 / BGSC 10A6 / LMG 26770 / FZB42) (Bacillus amyloliquefaciens subsp. plantarum), this protein is 3-phosphoshikimate 1-carboxyvinyltransferase.